The chain runs to 310 residues: 2-dehydropantoate 2-reductase (310 aa).

NADP(+) is bound by residues 9 to 14 (GVGAIG) and Asn-100. Substrate is bound at residue Asn-100. Lys-184 acts as the Proton donor in catalysis. Substrate is bound by residues Asn-188, Asn-192, and Ser-259. Glu-270 contacts NADP(+).

Belongs to the ketopantoate reductase family.

The protein localises to the cytoplasm. The catalysed reaction is (R)-pantoate + NADP(+) = 2-dehydropantoate + NADPH + H(+). It participates in cofactor biosynthesis; (R)-pantothenate biosynthesis; (R)-pantoate from 3-methyl-2-oxobutanoate: step 2/2. In terms of biological role, catalyzes the NADPH-dependent reduction of ketopantoate into pantoic acid. In Aquifex aeolicus (strain VF5), this protein is 2-dehydropantoate 2-reductase.